The sequence spans 421 residues: Testin (421 aa).

In terms of domain architecture, PET spans 92-199 (MILTNPVAAK…GDVKLPCEMD (108 aa)). The disordered stretch occupies residues 133–164 (EKQPVAGSEGAQYRKKQLAKQLPAHDQDPSKC). Residues 155–164 (PAHDQDPSKC) show a composition bias toward basic and acidic residues. LIM zinc-binding domains are found at residues 234–297 (YSCY…CDSE), 299–359 (PRCA…NHAV), and 362–421 (QGCH…KRMS).

Belongs to the prickle / espinas / testin family. As to quaternary structure, interacts via LIM domain 1 with ZYX. Interacts (via LIM domain 3) with ENAH and VASP. Interacts with ALKBH4, talin, actin, alpha-actinin, GRIP1 and PXN. Interacts (via LIM domain 2) with ACTL7A (via N-terminus). Heterodimer with ACTL7A; the heterodimer interacts with ENAH to form a heterotrimer.

The protein localises to the cytoplasm. It is found in the cell junction. It localises to the focal adhesion. Scaffold protein that may play a role in cell adhesion, cell spreading and in the reorganization of the actin cytoskeleton. Plays a role in the regulation of cell proliferation. May act as a tumor suppressor. The polypeptide is Testin (TES) (Pan troglodytes (Chimpanzee)).